A 60-amino-acid polypeptide reads, in one-letter code: Large ribosomal subunit protein bL32 (60 aa).

Residues 1-60 (MAVQQNKKSRSARDMRRSHDALESNALSVEKSTGEVHLRHHVSPDGFYRGRKVVDKGSDE) are disordered. The span at 11–22 (SARDMRRSHDAL) shows a compositional bias: basic and acidic residues.

It belongs to the bacterial ribosomal protein bL32 family.

The chain is Large ribosomal subunit protein bL32 from Pseudomonas aeruginosa (strain LESB58).